The sequence spans 287 residues: Hydroxysteroid 11-beta-dehydrogenase 1-like protein (287 aa).

A signal peptide spans 1-15 (MKVLLLTGLGALFFA). Residues 36-62 (GASA…TAHT), 87-88 (DM), and 114-116 (NHI) each bind NADP(+). Ser165 provides a ligand contact to substrate. The active-site Proton acceptor is the Tyr178. Residues 178–182 (YSAAK) and 211–217 (GLRDRAS) each bind NADP(+).

It belongs to the short-chain dehydrogenases/reductases (SDR) family.

It is found in the secreted. The catalysed reaction is cortisone + NADPH + H(+) = cortisol + NADP(+). Its function is as follows. Unidirectional NADP(+)-dependent cortisol dehydrogenase (in vitro). The sequence is that of Hydroxysteroid 11-beta-dehydrogenase 1-like protein (HSD11B1L) from Macaca fascicularis (Crab-eating macaque).